The chain runs to 432 residues: Enolase (432 aa).

Gln167 lines the (2R)-2-phosphoglycerate pocket. Glu209 acts as the Proton donor in catalysis. Mg(2+)-binding residues include Asp246, Glu291, and Asp318. (2R)-2-phosphoglycerate contacts are provided by Lys343, Arg372, Ser373, and Lys394. Residue Lys343 is the Proton acceptor of the active site.

It belongs to the enolase family. Component of the RNA degradosome, a multiprotein complex involved in RNA processing and mRNA degradation. Mg(2+) is required as a cofactor.

The protein resides in the cytoplasm. Its subcellular location is the secreted. It is found in the cell surface. It carries out the reaction (2R)-2-phosphoglycerate = phosphoenolpyruvate + H2O. It participates in carbohydrate degradation; glycolysis; pyruvate from D-glyceraldehyde 3-phosphate: step 4/5. Functionally, catalyzes the reversible conversion of 2-phosphoglycerate (2-PG) into phosphoenolpyruvate (PEP). It is essential for the degradation of carbohydrates via glycolysis. The protein is Enolase of Aliivibrio salmonicida (strain LFI1238) (Vibrio salmonicida (strain LFI1238)).